An 827-amino-acid polypeptide reads, in one-letter code: 4-hydroxy-3-methylbut-2-enyl diphosphate reductase (827 aa).

The 4-hydroxy-3-methylbut-2-enyl diphosphate reductase stretch occupies residues M1–I284. C12 serves as a coordination point for [4Fe-4S] cluster. (2E)-4-hydroxy-3-methylbut-2-enyl diphosphate is bound by residues H40 and H79. Positions 40 and 79 each coordinate dimethylallyl diphosphate. 2 residues coordinate isopentenyl diphosphate: H40 and H79. C101 contacts [4Fe-4S] cluster. H129 lines the (2E)-4-hydroxy-3-methylbut-2-enyl diphosphate pocket. H129 contributes to the dimethylallyl diphosphate binding site. H129 serves as a coordination point for isopentenyl diphosphate. Catalysis depends on E131, which acts as the Proton donor. A (2E)-4-hydroxy-3-methylbut-2-enyl diphosphate-binding site is contributed by T168. Position 196 (C196) interacts with [4Fe-4S] cluster. S224, S225, N226, and S268 together coordinate (2E)-4-hydroxy-3-methylbut-2-enyl diphosphate. 4 residues coordinate dimethylallyl diphosphate: S224, S225, N226, and S268. Isopentenyl diphosphate is bound by residues S224, S225, N226, and S268. S1 motif domains follow at residues G477–K545, D562–K632, D649–K716, and G733–K802.

It in the N-terminal section; belongs to the IspH family. [4Fe-4S] cluster is required as a cofactor.

It carries out the reaction isopentenyl diphosphate + 2 oxidized [2Fe-2S]-[ferredoxin] + H2O = (2E)-4-hydroxy-3-methylbut-2-enyl diphosphate + 2 reduced [2Fe-2S]-[ferredoxin] + 2 H(+). The catalysed reaction is dimethylallyl diphosphate + 2 oxidized [2Fe-2S]-[ferredoxin] + H2O = (2E)-4-hydroxy-3-methylbut-2-enyl diphosphate + 2 reduced [2Fe-2S]-[ferredoxin] + 2 H(+). The protein operates within isoprenoid biosynthesis; dimethylallyl diphosphate biosynthesis; dimethylallyl diphosphate from (2E)-4-hydroxy-3-methylbutenyl diphosphate: step 1/1. It functions in the pathway isoprenoid biosynthesis; isopentenyl diphosphate biosynthesis via DXP pathway; isopentenyl diphosphate from 1-deoxy-D-xylulose 5-phosphate: step 6/6. Catalyzes the conversion of 1-hydroxy-2-methyl-2-(E)-butenyl 4-diphosphate (HMBPP) into a mixture of isopentenyl diphosphate (IPP) and dimethylallyl diphosphate (DMAPP). Acts in the terminal step of the DOXP/MEP pathway for isoprenoid precursor biosynthesis. This Fusobacterium nucleatum subsp. nucleatum (strain ATCC 25586 / DSM 15643 / BCRC 10681 / CIP 101130 / JCM 8532 / KCTC 2640 / LMG 13131 / VPI 4355) protein is 4-hydroxy-3-methylbut-2-enyl diphosphate reductase.